We begin with the raw amino-acid sequence, 253 residues long: Vitamin B12 import ATP-binding protein BtuD (253 aa).

Positions 3–237 constitute an ABC transporter domain; that stretch reads LDAKNLAMPP…EQLESTFATQ (235 aa). 31 to 38 contacts ATP; the sequence is GPNGSGKS.

This sequence belongs to the ABC transporter superfamily. Vitamin B12 importer (TC 3.A.1.13.1) family. In terms of assembly, the complex is composed of two ATP-binding proteins (BtuD), two transmembrane proteins (BtuC) and a solute-binding protein (BtuF).

It localises to the cell inner membrane. The catalysed reaction is an R-cob(III)alamin(out) + ATP + H2O = an R-cob(III)alamin(in) + ADP + phosphate + H(+). Its function is as follows. Part of the ABC transporter complex BtuCDF involved in vitamin B12 import. Responsible for energy coupling to the transport system. The sequence is that of Vitamin B12 import ATP-binding protein BtuD from Photobacterium profundum (strain SS9).